The sequence spans 568 residues: Proline--tRNA ligase (568 aa).

This sequence belongs to the class-II aminoacyl-tRNA synthetase family. ProS type 1 subfamily. Homodimer.

The protein resides in the cytoplasm. The catalysed reaction is tRNA(Pro) + L-proline + ATP = L-prolyl-tRNA(Pro) + AMP + diphosphate. Functionally, catalyzes the attachment of proline to tRNA(Pro) in a two-step reaction: proline is first activated by ATP to form Pro-AMP and then transferred to the acceptor end of tRNA(Pro). As ProRS can inadvertently accommodate and process non-cognate amino acids such as alanine and cysteine, to avoid such errors it has two additional distinct editing activities against alanine. One activity is designated as 'pretransfer' editing and involves the tRNA(Pro)-independent hydrolysis of activated Ala-AMP. The other activity is designated 'posttransfer' editing and involves deacylation of mischarged Ala-tRNA(Pro). The misacylated Cys-tRNA(Pro) is not edited by ProRS. In Alkalilimnicola ehrlichii (strain ATCC BAA-1101 / DSM 17681 / MLHE-1), this protein is Proline--tRNA ligase.